The primary structure comprises 220 residues: Adenylate kinase (220 aa).

An ATP-binding site is contributed by 10–15; the sequence is GAGKGT. Residues 30–59 are NMP; the sequence is STGDMLRAAVKAGSPLGVEAKGYMDAGKLV. Residues Thr-31, Arg-36, 57–59, 85–88, and Gln-92 contribute to the AMP site; these read KLV and GFPR. Residues 122-159 form an LID region; the sequence is GRRTHPASGRTYHVKFNPPKVEGKDDVTGEPLIQRDDD. Residues Arg-123 and 132-133 contribute to the ATP site; that span reads TY. Positions 156 and 167 each coordinate AMP. Gly-206 is an ATP binding site.

The protein belongs to the adenylate kinase family. As to quaternary structure, monomer.

The protein localises to the cytoplasm. The catalysed reaction is AMP + ATP = 2 ADP. It participates in purine metabolism; AMP biosynthesis via salvage pathway; AMP from ADP: step 1/1. Catalyzes the reversible transfer of the terminal phosphate group between ATP and AMP. Plays an important role in cellular energy homeostasis and in adenine nucleotide metabolism. This Burkholderia ambifaria (strain ATCC BAA-244 / DSM 16087 / CCUG 44356 / LMG 19182 / AMMD) (Burkholderia cepacia (strain AMMD)) protein is Adenylate kinase.